Reading from the N-terminus, the 291-residue chain is ATP synthase gamma chain (291 aa).

This sequence belongs to the ATPase gamma chain family. In terms of assembly, F-type ATPases have 2 components, CF(1) - the catalytic core - and CF(0) - the membrane proton channel. CF(1) has five subunits: alpha(3), beta(3), gamma(1), delta(1), epsilon(1). CF(0) has three main subunits: a, b and c.

It localises to the cell inner membrane. Functionally, produces ATP from ADP in the presence of a proton gradient across the membrane. The gamma chain is believed to be important in regulating ATPase activity and the flow of protons through the CF(0) complex. In Nitratidesulfovibrio vulgaris (strain ATCC 29579 / DSM 644 / CCUG 34227 / NCIMB 8303 / VKM B-1760 / Hildenborough) (Desulfovibrio vulgaris), this protein is ATP synthase gamma chain.